Consider the following 178-residue polypeptide: MKNMEQQHIEVVGKLGSTYGIRGWLRIYSSTEQAESIFDYQPWFLKIKGEWQSIELENWRYHNHEIIVKLKGVDDREAAQILANVEIGVDLSVFPELEEGDYYWHDLIGCTVVNLEGYTMGTVTEMMETGSNDVLVVKANTKDAFGKQERLIPFLYEQVVKRVDLTTKTIEVDWDAGF.

The PRC barrel domain occupies 99–178 (EGDYYWHDLI…TIEVDWDAGF (80 aa)).

It belongs to the RimM family. As to quaternary structure, binds ribosomal protein uS19.

The protein resides in the cytoplasm. In terms of biological role, an accessory protein needed during the final step in the assembly of 30S ribosomal subunit, possibly for assembly of the head region. Essential for efficient processing of 16S rRNA. May be needed both before and after RbfA during the maturation of 16S rRNA. It has affinity for free ribosomal 30S subunits but not for 70S ribosomes. The protein is Ribosome maturation factor RimM of Haemophilus influenzae (strain ATCC 51907 / DSM 11121 / KW20 / Rd).